A 105-amino-acid polypeptide reads, in one-letter code: Insulin (105 aa).

Residues 1–24 (MALWTRLRPLLALLALWPPPPARA) form the signal peptide. 3 disulfide bridges follow: Cys31/Cys91, Cys43/Cys104, and Cys90/Cys95. A propeptide spans 57–82 (EVEGPQVGALELAGGPGAGGLEGPPQ) (c peptide).

This sequence belongs to the insulin family. As to quaternary structure, heterodimer of a B chain and an A chain linked by two disulfide bonds.

The protein resides in the secreted. Functionally, insulin decreases blood glucose concentration. It increases cell permeability to monosaccharides, amino acids and fatty acids. It accelerates glycolysis, the pentose phosphate cycle, and glycogen synthesis in liver. This Bos taurus (Bovine) protein is Insulin (INS).